A 266-amino-acid polypeptide reads, in one-letter code: Vitamin B12-binding protein (266 aa).

The first 22 residues, 1–22, serve as a signal peptide directing secretion; that stretch reads MAKSLFRALVALSFLAPLWLNA. Residues 25–266 form the Fe/B12 periplasmic-binding domain; it reads RVITLSPANT…QLCNALSQVD (242 aa). Cyanocob(III)alamin is bound by residues Y50 and 242–246; that span reads DWFER. A disulfide bridge links C183 with C259.

Belongs to the BtuF family. As to quaternary structure, the complex is composed of two ATP-binding proteins (BtuD), two transmembrane proteins (BtuC) and a solute-binding protein (BtuF).

The protein resides in the periplasm. Part of the ABC transporter complex BtuCDF involved in vitamin B12 import. Binds vitamin B12 and delivers it to the periplasmic surface of BtuC. In Escherichia coli O6:H1 (strain CFT073 / ATCC 700928 / UPEC), this protein is Vitamin B12-binding protein.